Here is a 427-residue protein sequence, read N- to C-terminus: 3-phosphoshikimate 1-carboxyvinyltransferase (427 aa).

The 3-phosphoshikimate site is built by K23, S24, and R28. K23 is a binding site for phosphoenolpyruvate. G97 and R125 together coordinate phosphoenolpyruvate. Residues S170, S171, Q172, S198, D314, N337, and K341 each contribute to the 3-phosphoshikimate site. Q172 is a phosphoenolpyruvate binding site. D314 serves as the catalytic Proton acceptor. Phosphoenolpyruvate-binding residues include R345, R387, and K412.

This sequence belongs to the EPSP synthase family. Monomer.

It is found in the cytoplasm. The enzyme catalyses 3-phosphoshikimate + phosphoenolpyruvate = 5-O-(1-carboxyvinyl)-3-phosphoshikimate + phosphate. It participates in metabolic intermediate biosynthesis; chorismate biosynthesis; chorismate from D-erythrose 4-phosphate and phosphoenolpyruvate: step 6/7. In terms of biological role, catalyzes the transfer of the enolpyruvyl moiety of phosphoenolpyruvate (PEP) to the 5-hydroxyl of shikimate-3-phosphate (S3P) to produce enolpyruvyl shikimate-3-phosphate and inorganic phosphate. In Buchnera aphidicola subsp. Baizongia pistaciae (strain Bp), this protein is 3-phosphoshikimate 1-carboxyvinyltransferase.